We begin with the raw amino-acid sequence, 387 residues long: Galactokinase (387 aa).

A substrate-binding site is contributed by 33-36 (EHTD). ATP is bound by residues serine 67 and 123–129 (GAGLSSS). Mg(2+) is bound by residues serine 129 and glutamate 161. Catalysis depends on aspartate 173, which acts as the Proton acceptor. Tyrosine 223 is a binding site for substrate.

It belongs to the GHMP kinase family. GalK subfamily.

Its subcellular location is the cytoplasm. The catalysed reaction is alpha-D-galactose + ATP = alpha-D-galactose 1-phosphate + ADP + H(+). It functions in the pathway carbohydrate metabolism; galactose metabolism. Its function is as follows. Catalyzes the transfer of the gamma-phosphate of ATP to D-galactose to form alpha-D-galactose-1-phosphate (Gal-1-P). This is Galactokinase from Lacticaseibacillus casei (Lactobacillus casei).